Consider the following 360-residue polypeptide: Photosystem II protein D1 (360 aa).

3 helical membrane passes run 29–46 (YIGWFGVLMIPTLLTATS), 118–133 (HFLLGVSCYIGREWEL), and 142–156 (WISVAFTAPVAAAAA). Histidine 118 is a binding site for chlorophyll a. Tyrosine 126 serves as a coordination point for pheophytin a. [CaMn4O5] cluster-binding residues include aspartate 170 and glutamate 189. A helical membrane pass occupies residues 197–218 (FHQLGVAGVFGGSLFSAMHGSL). Histidine 198 contacts chlorophyll a. A quinone-binding positions include histidine 215 and 264–265 (SF). A Fe cation-binding site is contributed by histidine 215. Histidine 272 is a binding site for Fe cation. A helical membrane pass occupies residues 274–288 (FLGLWPVVGIWFTAM). Histidine 332, glutamate 333, aspartate 342, and alanine 344 together coordinate [CaMn4O5] cluster. Residues 345–360 (SSNSLPVSLVAPSVNG) constitute a propeptide that is removed on maturation.

The protein belongs to the reaction center PufL/M/PsbA/D family. As to quaternary structure, PSII is composed of 1 copy each of membrane proteins PsbA, PsbB, PsbC, PsbD, PsbE, PsbF, PsbH, PsbI, PsbJ, PsbK, PsbL, PsbM, PsbT, PsbX, PsbY, PsbZ, Psb30/Ycf12, at least 3 peripheral proteins of the oxygen-evolving complex and a large number of cofactors. It forms dimeric complexes. Requires The D1/D2 heterodimer binds P680, chlorophylls that are the primary electron donor of PSII, and subsequent electron acceptors. It shares a non-heme iron and each subunit binds pheophytin, quinone, additional chlorophylls, carotenoids and lipids. D1 provides most of the ligands for the Mn4-Ca-O5 cluster of the oxygen-evolving complex (OEC). There is also a Cl(-1) ion associated with D1 and D2, which is required for oxygen evolution. The PSII complex binds additional chlorophylls, carotenoids and specific lipids. as cofactor. In terms of processing, tyr-161 forms a radical intermediate that is referred to as redox-active TyrZ, YZ or Y-Z. Post-translationally, C-terminally processed by CTPA; processing is essential to allow assembly of the oxygen-evolving complex and thus photosynthetic growth.

Its subcellular location is the plastid. The protein localises to the chloroplast thylakoid membrane. The enzyme catalyses 2 a plastoquinone + 4 hnu + 2 H2O = 2 a plastoquinol + O2. Its function is as follows. Photosystem II (PSII) is a light-driven water:plastoquinone oxidoreductase that uses light energy to abstract electrons from H(2)O, generating O(2) and a proton gradient subsequently used for ATP formation. It consists of a core antenna complex that captures photons, and an electron transfer chain that converts photonic excitation into a charge separation. The D1/D2 (PsbA/PsbD) reaction center heterodimer binds P680, the primary electron donor of PSII as well as several subsequent electron acceptors. The sequence is that of Photosystem II protein D1 from Gracilaria tenuistipitata var. liui (Red alga).